Consider the following 1319-residue polypeptide: DNA-directed RNA polymerase subunit beta' (1319 aa).

Positions 59, 61, 74, and 77 each coordinate Zn(2+). Asp-449, Asp-451, and Asp-453 together coordinate Mg(2+). 4 residues coordinate Zn(2+): Cys-773, Cys-846, Cys-853, and Cys-856.

It belongs to the RNA polymerase beta' chain family. The RNAP catalytic core consists of 2 alpha, 1 beta, 1 beta' and 1 omega subunit. When a sigma factor is associated with the core the holoenzyme is formed, which can initiate transcription. The cofactor is Mg(2+). Zn(2+) is required as a cofactor.

It carries out the reaction RNA(n) + a ribonucleoside 5'-triphosphate = RNA(n+1) + diphosphate. Functionally, DNA-dependent RNA polymerase catalyzes the transcription of DNA into RNA using the four ribonucleoside triphosphates as substrates. This is DNA-directed RNA polymerase subunit beta' from Fusobacterium nucleatum subsp. nucleatum (strain ATCC 25586 / DSM 15643 / BCRC 10681 / CIP 101130 / JCM 8532 / KCTC 2640 / LMG 13131 / VPI 4355).